The chain runs to 134 residues: Cytochrome b (134 aa).

The next 3 helical transmembrane spans lie at 33–53 (FGSL…FLAM), 77–98 (WLLR…YLHV), and 113–133 (WNIG…GYVL). Residues H83 and H97 each contribute to the heme b site.

Belongs to the cytochrome b family. The cytochrome bc1 complex contains 11 subunits: 3 respiratory subunits (MT-CYB, CYC1 and UQCRFS1), 2 core proteins (UQCRC1 and UQCRC2) and 6 low-molecular weight proteins (UQCRH/QCR6, UQCRB/QCR7, UQCRQ/QCR8, UQCR10/QCR9, UQCR11/QCR10 and a cleavage product of UQCRFS1). This cytochrome bc1 complex then forms a dimer. Requires heme b as cofactor.

The protein localises to the mitochondrion inner membrane. Its function is as follows. Component of the ubiquinol-cytochrome c reductase complex (complex III or cytochrome b-c1 complex) that is part of the mitochondrial respiratory chain. The b-c1 complex mediates electron transfer from ubiquinol to cytochrome c. Contributes to the generation of a proton gradient across the mitochondrial membrane that is then used for ATP synthesis. The protein is Cytochrome b (MT-CYB) of Sturnira tildae (Tilda's yellow-shouldered bat).